The primary structure comprises 67 residues: Theromin (67 aa).

Positions 2–27 constitute an Antistasin-like domain; that stretch reads CENTECPRACPGEYEFDEDGCNTCVC.

As to quaternary structure, homodimer. Eight disulfide bonds are present.

It is found in the secreted. Functionally, potent thrombin-specific inhibitor. The sequence is that of Theromin from Theromyzon tessulatum (Duck leech).